The chain runs to 1328 residues: ABC transporter C family member 7 (1328 aa).

The ABC transmembrane type-1 1 domain occupies 104-389; that stretch reads HKTSIIVQIF…LPQAIQRLLS (286 aa). Helical transmembrane passes span 112 to 132, 140 to 160, 224 to 244, 245 to 265, 287 to 307, and 333 to 353; these read IFSA…ILYV, SFLV…FLSI, LILL…CWTI, GYSG…STFL, ISEM…LFFI, and MVVQ…YTLI. The ABC transporter 1 domain occupies 457–678; that stretch reads IELVNNDSIE…FDFESIMKTK (222 aa). 490–497 lines the ATP pocket; sequence GVVGSGKS. Low complexity predominate over residues 684 to 695; sequence LNNSNNNNNNNN. Residues 684–708 form a disordered region; the sequence is LNNSNNNNNNNNNKEEEEDVENLEK. 5 consecutive transmembrane segments (helical) span residues 762-782, 802-822, 894-914, 988-1008, and 1014-1034; these read FIFF…FLLF, DSFY…FLGI, VLMM…LALF, IGIK…FFSL, and GLSV…NWCI. An ABC transmembrane type-1 2 domain is found at 765 to 1046; that stretch reads FFTMIMMYII…YIEFSMKMSS (282 aa). The ABC transporter 2 domain occupies 1083 to 1316; the sequence is IQFKNVEIKY…INNQNSKFKK (234 aa). 1117–1124 lines the ATP pocket; it reads GKSGSGKS.

Belongs to the ABC transporter superfamily. ABCC family. Conjugate transporter (TC 3.A.1.208) subfamily.

The protein localises to the membrane. This chain is ABC transporter C family member 7 (abcC7), found in Dictyostelium discoideum (Social amoeba).